Reading from the N-terminus, the 138-residue chain is Ribosome-binding factor A (138 aa).

A disordered region spans residues 117–138; sequence ERQNKPAASTEKPPVGSLDADL.

Belongs to the RbfA family. As to quaternary structure, monomer. Binds 30S ribosomal subunits, but not 50S ribosomal subunits or 70S ribosomes.

Its subcellular location is the cytoplasm. One of several proteins that assist in the late maturation steps of the functional core of the 30S ribosomal subunit. Associates with free 30S ribosomal subunits (but not with 30S subunits that are part of 70S ribosomes or polysomes). Required for efficient processing of 16S rRNA. May interact with the 5'-terminal helix region of 16S rRNA. This is Ribosome-binding factor A from Acaryochloris marina (strain MBIC 11017).